The chain runs to 105 residues: UPF0251 protein AF_0666 (105 aa).

It belongs to the UPF0251 family.

The polypeptide is UPF0251 protein AF_0666 (Archaeoglobus fulgidus (strain ATCC 49558 / DSM 4304 / JCM 9628 / NBRC 100126 / VC-16)).